The following is a 144-amino-acid chain: Histone H2B.2, sperm (144 aa).

Residues 1–51 (MPRSPAKTSPRKGSPRKGSPSRKASPKRGGKGAKRAGKGGRRRRVVKRRRR) form a disordered region. 5 consecutive short sequence motifs (SPKK motif) follow at residues 4 to 7 (SPAK), 9 to 12 (SPRK), 14 to 17 (SPRK), 19 to 22 (SPSR), and 25 to 28 (SPKR). Phosphoserine is present on residues Ser-14, Ser-19, and Ser-25. Residues 24-51 (ASPKRGGKGAKRAGKGGRRRRVVKRRRR) are compositionally biased toward basic residues. Ser-131 is a glycosylation site (O-linked (GlcNAc) serine). Lys-139 participates in a covalent cross-link: Glycyl lysine isopeptide (Lys-Gly) (interchain with G-Cter in ubiquitin).

This sequence belongs to the histone H2B family. As to quaternary structure, the nucleosome is a histone octamer containing two molecules each of H2A, H2B, H3 and H4 assembled in one H3-H4 heterotetramer and two H2A-H2B heterodimers. The octamer wraps approximately 147 bp of DNA. Post-translationally, monoubiquitination of Lys-139 gives a specific tag for epigenetic transcriptional activation and is also prerequisite for histone H3 'Lys-4' and 'Lys-79' methylation. In terms of processing, phosphorylated on SPKK motifs 3, 4 and 5; which may regulate DNA binding. Dephosphorylated during maturation of spermatids to mature sperm and rephosphorylated at fertilization.

It localises to the nucleus. The protein resides in the chromosome. Functionally, core component of nucleosome. Nucleosomes wrap and compact DNA into chromatin, limiting DNA accessibility to the cellular machineries which require DNA as a template. Histones thereby play a central role in transcription regulation, DNA repair, DNA replication and chromosomal stability. DNA accessibility is regulated via a complex set of post-translational modifications of histones, also called histone code, and nucleosome remodeling. The chain is Histone H2B.2, sperm from Parechinus angulosus (Angulate sea urchin).